Reading from the N-terminus, the 31-residue chain is Acetyl-CoA carboxylase (31 aa).

A disordered region spans residues 1–31 (RISSSVIAHKTQLDSGKREVYSSHMQLGGPK). Basic and acidic residues predominate over residues 11–21 (TQLDSGKREVY).

It catalyses the reaction hydrogencarbonate + acetyl-CoA + ATP = malonyl-CoA + ADP + phosphate + H(+). It functions in the pathway lipid metabolism; malonyl-CoA biosynthesis; malonyl-CoA from acetyl-CoA: step 1/1. The chain is Acetyl-CoA carboxylase from Catharanthus roseus (Madagascar periwinkle).